Consider the following 186-residue polypeptide: Peptidyl-tRNA hydrolase (186 aa).

Tyr-14 serves as a coordination point for tRNA. His-19 functions as the Proton acceptor in the catalytic mechanism. Positions 64, 66, and 112 each coordinate tRNA.

It belongs to the PTH family. Monomer.

Its subcellular location is the cytoplasm. The catalysed reaction is an N-acyl-L-alpha-aminoacyl-tRNA + H2O = an N-acyl-L-amino acid + a tRNA + H(+). Functionally, hydrolyzes ribosome-free peptidyl-tRNAs (with 1 or more amino acids incorporated), which drop off the ribosome during protein synthesis, or as a result of ribosome stalling. Its function is as follows. Catalyzes the release of premature peptidyl moieties from peptidyl-tRNA molecules trapped in stalled 50S ribosomal subunits, and thus maintains levels of free tRNAs and 50S ribosomes. The sequence is that of Peptidyl-tRNA hydrolase from Mycoplasma capricolum subsp. capricolum (strain California kid / ATCC 27343 / NCTC 10154).